The sequence spans 500 residues: Lysine--tRNA ligase (500 aa).

Residues Glu-410 and Glu-417 each contribute to the Mg(2+) site.

The protein belongs to the class-II aminoacyl-tRNA synthetase family. In terms of assembly, homodimer. It depends on Mg(2+) as a cofactor.

It is found in the cytoplasm. The catalysed reaction is tRNA(Lys) + L-lysine + ATP = L-lysyl-tRNA(Lys) + AMP + diphosphate. In Shewanella putrefaciens (strain CN-32 / ATCC BAA-453), this protein is Lysine--tRNA ligase.